The primary structure comprises 376 residues: Chaperone protein DnaJ (376 aa).

The 66-residue stretch at 5–70 folds into the J domain; the sequence is DYYEVLGVGR…DKKAAYDQFG (66 aa). The segment at 132–210 adopts a CR-type zinc-finger fold; the sequence is GLTKELRIPT…CHGEGRVEKS (79 aa). Cys145, Cys148, Cys162, Cys165, Cys184, Cys187, Cys198, and Cys201 together coordinate Zn(2+). 4 CXXCXGXG motif repeats span residues 145-152, 162-169, 184-191, and 198-205; these read CDLCDGSG, CGTCHGQG, CPTCHGRG, and CGKCHGEG.

It belongs to the DnaJ family. As to quaternary structure, homodimer. Requires Zn(2+) as cofactor.

It is found in the cytoplasm. Its function is as follows. Participates actively in the response to hyperosmotic and heat shock by preventing the aggregation of stress-denatured proteins and by disaggregating proteins, also in an autonomous, DnaK-independent fashion. Unfolded proteins bind initially to DnaJ; upon interaction with the DnaJ-bound protein, DnaK hydrolyzes its bound ATP, resulting in the formation of a stable complex. GrpE releases ADP from DnaK; ATP binding to DnaK triggers the release of the substrate protein, thus completing the reaction cycle. Several rounds of ATP-dependent interactions between DnaJ, DnaK and GrpE are required for fully efficient folding. Also involved, together with DnaK and GrpE, in the DNA replication of plasmids through activation of initiation proteins. The sequence is that of Chaperone protein DnaJ from Shewanella frigidimarina (strain NCIMB 400).